Consider the following 68-residue polypeptide: Large ribosomal subunit protein bL31 (68 aa).

Zn(2+)-binding residues include Cys16, Cys18, Cys36, and Cys39.

Belongs to the bacterial ribosomal protein bL31 family. Type A subfamily. Part of the 50S ribosomal subunit. Zn(2+) is required as a cofactor.

In terms of biological role, binds the 23S rRNA. In Lachnospira eligens (strain ATCC 27750 / DSM 3376 / VPI C15-48 / C15-B4) (Eubacterium eligens), this protein is Large ribosomal subunit protein bL31.